The sequence spans 498 residues: U4/U6 small nuclear ribonucleoprotein Prp31 (498 aa).

Coiled coils occupy residues 84–119 and 180–214; these read EAAPEYKVIVDANNLTVEIENELNIIHKFIRDKYSK and DEELERIEEACDMALELNQSKHRIYEYVESRMSFI. Positions 214–332 constitute a Nop domain; it reads IAPNLSIIVG…IERKFDKWQE (119 aa). Residues 333-356 form a disordered region; the sequence is PPPVKQVKPLPAPLDGQRKKRGGR. Residues 350 to 363 carry the Nuclear localization signal (NLS) motif; the sequence is RKKRGGRRYRKMKE.

The protein belongs to the PRP31 family. In terms of assembly, identified in the spliceosome B complex. Component of the U4/U6-U5 tri-snRNP complex. Component of some MLL1/MLL complex.

It localises to the nucleus. The protein localises to the nucleus speckle. Its subcellular location is the cajal body. Functionally, involved in pre-mRNA splicing as component of the spliceosome. Required for the assembly of the U4/U5/U6 tri-snRNP complex, one of the building blocks of the spliceosome. The protein is U4/U6 small nuclear ribonucleoprotein Prp31 (prpf31) of Xenopus tropicalis (Western clawed frog).